The primary structure comprises 521 residues: GMP synthase [glutamine-hydrolyzing] (521 aa).

The 196-residue stretch at 8–203 folds into the Glutamine amidotransferase type-1 domain; the sequence is KILILDFGAQ…VVDVCGCQTL (196 aa). Cys85 serves as the catalytic Nucleophile. Residues His177 and Glu179 contribute to the active site. Positions 204–396 constitute a GMPS ATP-PPase domain; sequence WTAANIIEDQ…LGLPRTMVYR (193 aa). 231–237 contacts ATP; the sequence is SGGVDSS.

In terms of assembly, homodimer.

The enzyme catalyses XMP + L-glutamine + ATP + H2O = GMP + L-glutamate + AMP + diphosphate + 2 H(+). Its pathway is purine metabolism; GMP biosynthesis; GMP from XMP (L-Gln route): step 1/1. Functionally, catalyzes the synthesis of GMP from XMP. In Xanthomonas axonopodis pv. citri (strain 306), this protein is GMP synthase [glutamine-hydrolyzing].